Here is a 319-residue protein sequence, read N- to C-terminus: Taste receptor type 2 member 30 (319 aa).

A topological domain (extracellular) is located at residue methionine 1. Residues 2–22 (ITFLPIIFSILIVVIFVIGNF) form a helical membrane-spanning segment. The Cytoplasmic segment spans residues 23–46 (ANGFIALVNSIEWVKRQKISFADQ). Residues 47–67 (ILIALAVSRVGLLWALLLHWY) form a helical membrane-spanning segment. Topologically, residues 68–86 (ATELNLAFYSVEVRITAYN) are extracellular. The chain crosses the membrane as a helical span at residues 87–107 (VWAVTNHFSNWLATSLSMFYL). Over 108–126 (LKIANFSNLIFLRIKRRVK) the chain is Cytoplasmic. Residues 127–147 (SVILVILLGPLLFLVCHLFVI) traverse the membrane as a helical segment. At 148-178 (NMNEIVWTKEYEGNLTWKIKLRNAVFLSNMT) the chain is on the extracellular side. 2 N-linked (GlcNAc...) asparagine glycosylation sites follow: asparagine 161 and asparagine 176. Residues 179–199 (LTMLANFVPLTLTLISFLLLI) traverse the membrane as a helical segment. At 200-229 (CSLCKHLKKMQLHGKGSQDPSTKVHIKALQ) the chain is on the cytoplasmic side. Residues 230-250 (TVTCFLLLCAIYFLSMIISVY) form a helical membrane-spanning segment. At 251 to 259 (NFGRLEKKP) the chain is on the extracellular side. Residues 260–280 (VFMFCQAITFSYPSTHAFILI) form a helical membrane-spanning segment. The Cytoplasmic segment spans residues 281 to 319 (WGNKKLKQIFLSVLWHVRYWVKDRSLRLHRFTRAALCKG).

The protein belongs to the G-protein coupled receptor T2R family.

It is found in the membrane. In terms of biological role, receptor that may play a role in the perception of bitterness and is gustducin-linked. May play a role in sensing the chemical composition of the gastrointestinal content. The activity of this receptor may stimulate alpha gustducin, mediate PLC-beta-2 activation and lead to the gating of TRPM5. This chain is Taste receptor type 2 member 30 (TAS2R30), found in Pongo pygmaeus (Bornean orangutan).